Reading from the N-terminus, the 942-residue chain is MFGQLLGDPNKRRLKNYYPIVSEINILEEDISVLSDEELRGSTNEFRQRLEKAENSDKQLKILDELLPNAFAVVREASKRVLGMRHFDVQLIGGMVLHEGQIAEMKTGEGKTLVSTLPSYLNALTGKGVHVVTVNDYLAKRDAEWMGQVHRFLGLEVGLIQQDMNPRERKKNYQCDITYATNSELGFDYLRDNMAADKAEIVQRDFQFCVIDEVDSILIDEARTPLIISGQVERPQEKYQKAAEVVMKLQRASELGKDGIDPEGDYEVDEKQRSCVLTDDGFAKTEELLEVKDLFDPKDPWAHYVTNALKAKELFTKDVNYIVRNGEAVIVDEFTGRVMPGRRWSDGQHQAIEAKENLAIQPETQTLASITYQNFFLLYPRLSGMTGTAKTEEVEFDKTYKLKTSVIPTNKKVSREDWVDQVFKTENAKWRAVAKETSLINKQGRPILVGTTSVEKSELLSTLLAEENIPHNLLNAKPENVERESEIVAQAGRKGAVTIATNMAGRGTDIILGGNSEYMAKLKIKQVLSSRLVKPEDRHNPPVPLQRDKASGFKSLEVKAEAKTSNQSSSLNNLFPVILSDKTDNELGQLAAKLVKEWGDRALTLGELEDYIATAAEKTPTKDENILAIRRAIHSIKTEYEVITNNEEKLVTEAGGLHVIGTERHESRRVDNQLRGRAGRQGDFGSTRFFLSLEDNLLRIFGGDRVAGLMNAFRVEEDMPIESGMLTRSLEGAQKKVETYYYDIRKQVFEYDEVMNNQRKAVYSERRRVLKGQELKSQVISYGEKTMGEIVDAYINEELPPEEWELDKLVGKVQEFIYLLNDLKSSELIGLDTNQLKVFLQEQMRNAYDLKEAQLEETHPGIMREAEKFFMLQQLDTLWREHLQSMDSLRESVGLRGYGQKDPLIEYKNEGYDMFLEMMINFRRNVIYSMFMFQPTTKKVES.

ATP contacts are provided by residues Q90, 108 to 112 (GEGKT), and D509.

It belongs to the SecA family. Monomer and homodimer. Part of the essential Sec protein translocation apparatus which comprises SecA, SecYEG and auxiliary proteins SecDF. Other proteins may also be involved.

Its subcellular location is the cell inner membrane. The protein localises to the cellular thylakoid membrane. The protein resides in the cytoplasm. The enzyme catalyses ATP + H2O + cellular proteinSide 1 = ADP + phosphate + cellular proteinSide 2.. In terms of biological role, part of the Sec protein translocase complex. Interacts with the SecYEG preprotein conducting channel. Has a central role in coupling the hydrolysis of ATP to the transfer of proteins into and across the cell membrane, serving as an ATP-driven molecular motor driving the stepwise translocation of polypeptide chains across the membrane. Its function is as follows. Probably participates in protein translocation into and across both the cytoplasmic and thylakoid membranes in cyanobacterial cells. This is Protein translocase subunit SecA from Prochlorococcus marinus (strain NATL2A).